The sequence spans 318 residues: Curved DNA-binding protein (318 aa).

In terms of domain architecture, J spans 5–69; the sequence is DYYKILGVEP…QKRAEFDEIR (65 aa). The tract at residues 111-130 is disordered; sequence GGGNPFGGARQQQRSAGRRG.

Its subcellular location is the cytoplasm. It localises to the nucleoid. DNA-binding protein that preferentially recognizes a curved DNA sequence. It is probably a functional analog of DnaJ; displays overlapping activities with DnaJ, but functions under different conditions, probably acting as a molecular chaperone in an adaptive response to environmental stresses other than heat shock. Lacks autonomous chaperone activity; binds native substrates and targets them for recognition by DnaK. Its activity is inhibited by the binding of CbpM. The chain is Curved DNA-binding protein from Pseudomonas putida (strain GB-1).